Consider the following 145-residue polypeptide: Ribonuclease VapC7 (145 aa).

The PINc domain maps to 2-129 (IVLDTTVLVY…PAFADLSDVV (128 aa)). Mg(2+)-binding residues include Asp5 and Asp100.

This sequence belongs to the PINc/VapC protein family. Mg(2+) serves as cofactor.

In terms of biological role, toxic component of a type II toxin-antitoxin (TA) system. An RNase. The cognate antitoxin is VapB7. The chain is Ribonuclease VapC7 from Mycobacterium tuberculosis (strain ATCC 25618 / H37Rv).